A 96-amino-acid polypeptide reads, in one-letter code: MSDTLLDLDFETTAQNPNSNEILPLGTEALIIYNSPSGEKRSTKNQTKENTKNDTGSLFDDLGIKDHTANQQTNENSKPLSDSEILKKFSSPPHPK.

Residues 35–96 form a disordered region; that stretch reads SPSGEKRSTK…KKFSSPPHPK (62 aa). The span at 38–52 shows a compositional bias: basic and acidic residues; that stretch reads GEKRSTKNQTKENTK. The segment covering 69–80 has biased composition (polar residues); that stretch reads ANQQTNENSKPL.

This is an uncharacterized protein from Dictyostelium discoideum (Social amoeba).